We begin with the raw amino-acid sequence, 83 residues long: U5-theraphotoxin-Hs1c (83 aa).

The signal sequence occupies residues 1–21; it reads MKTSMFLTLTGLVLLFVVCYA. Residues 22–49 constitute a propeptide that is removed on maturation; the sequence is SESEEKEFPKELLSSIFAADSDFKVEER. 3 disulfides stabilise this stretch: Cys51–Cys63, Cys56–Cys68, and Cys62–Cys75.

This sequence belongs to the neurotoxin 10 (Hwtx-1) family. 51 (Hntx-8) subfamily. Hntx-8 sub-subfamily. As to expression, expressed by the venom gland.

Its subcellular location is the secreted. Its function is as follows. Agglutinates erythrocytes. The polypeptide is U5-theraphotoxin-Hs1c (Cyriopagopus schmidti (Chinese bird spider)).